We begin with the raw amino-acid sequence, 669 residues long: Elongation factor G 2 (669 aa).

The 276-residue stretch at 1-276 (MSIRNIGIMA…SIVDYLPSPF (276 aa)) folds into the tr-type G domain. GTP contacts are provided by residues 10 to 17 (AHIDAGKT), 74 to 78 (DTPGH), and 128 to 131 (NKMD).

This sequence belongs to the TRAFAC class translation factor GTPase superfamily. Classic translation factor GTPase family. EF-G/EF-2 subfamily.

Its subcellular location is the cytoplasm. Its function is as follows. Catalyzes the GTP-dependent ribosomal translocation step during translation elongation. During this step, the ribosome changes from the pre-translocational (PRE) to the post-translocational (POST) state as the newly formed A-site-bound peptidyl-tRNA and P-site-bound deacylated tRNA move to the P and E sites, respectively. Catalyzes the coordinated movement of the two tRNA molecules, the mRNA and conformational changes in the ribosome. The sequence is that of Elongation factor G 2 (fusB) from Borreliella burgdorferi (strain ATCC 35210 / DSM 4680 / CIP 102532 / B31) (Borrelia burgdorferi).